Reading from the N-terminus, the 76-residue chain is ATP synthase subunit c (76 aa).

Transmembrane regions (helical) follow at residues 7–27 (VATALAVGLGAIGPGVGIGII) and 50–70 (FIGIAFTEALAIFGLVIAFLI).

This sequence belongs to the ATPase C chain family. F-type ATPases have 2 components, F(1) - the catalytic core - and F(0) - the membrane proton channel. F(1) has five subunits: alpha(3), beta(3), gamma(1), delta(1), epsilon(1). F(0) has four main subunits: a(1), b(1), b'(1) and c(10-14). The alpha and beta chains form an alternating ring which encloses part of the gamma chain. F(1) is attached to F(0) by a central stalk formed by the gamma and epsilon chains, while a peripheral stalk is formed by the delta, b and b' chains.

The protein resides in the cell membrane. F(1)F(0) ATP synthase produces ATP from ADP in the presence of a proton or sodium gradient. F-type ATPases consist of two structural domains, F(1) containing the extramembraneous catalytic core and F(0) containing the membrane proton channel, linked together by a central stalk and a peripheral stalk. During catalysis, ATP synthesis in the catalytic domain of F(1) is coupled via a rotary mechanism of the central stalk subunits to proton translocation. Its function is as follows. Key component of the F(0) channel; it plays a direct role in translocation across the membrane. A homomeric c-ring of between 10-14 subunits forms the central stalk rotor element with the F(1) delta and epsilon subunits. The chain is ATP synthase subunit c from Chloroflexus aurantiacus (strain ATCC 29366 / DSM 635 / J-10-fl).